The following is a 53-amino-acid chain: UPF0391 membrane protein BURPS1106A_A2993 (53 aa).

2 consecutive transmembrane segments (helical) span residues 5-25 and 30-50; these read ALIF…GIAA and IAKI…VLGV.

It belongs to the UPF0391 family.

The protein localises to the cell membrane. The polypeptide is UPF0391 membrane protein BURPS1106A_A2993 (Burkholderia pseudomallei (strain 1106a)).